Consider the following 352-residue polypeptide: Non-disjunction protein 1 (352 aa).

In terms of assembly, interacts with MPS3.

Its subcellular location is the nucleus. It localises to the chromosome. It is found in the telomere. Functionally, required for telomeric clustering (bouquet stage) during meiosis 1 prophase, formation and efficient homolog pairing, meiosis 1 disjunction, and telomere deletion during meiosis. Also promotes meiotic recombination. The chain is Non-disjunction protein 1 (NDJ1) from Saccharomyces cerevisiae (strain ATCC 204508 / S288c) (Baker's yeast).